We begin with the raw amino-acid sequence, 156 residues long: VapC ribonuclease AF_1683 (156 aa).

A PINc domain is found at 4–125; that stretch reads LIDTGIFFGF…KLISYDSRFS (122 aa). Mg(2+)-binding residues include D6 and D103.

The protein belongs to the PINc/VapC protein family. It depends on Mg(2+) as a cofactor.

Toxic component of a type II toxin-antitoxin (TA) system. An RNase. The chain is VapC ribonuclease AF_1683 from Archaeoglobus fulgidus (strain ATCC 49558 / DSM 4304 / JCM 9628 / NBRC 100126 / VC-16).